The sequence spans 437 residues: Leucine-rich repeat flightless-interacting protein 2 (437 aa).

Ser18 carries the phosphoserine modification. Residues Glu22–Arg49 are a coiled coil. Residues Ala33–Ser62 show a composition bias toward basic and acidic residues. The segment at Ala33–Ser152 is disordered. A compositionally biased stretch (polar residues) spans Lys63–Ser74. Residues Lys77 to Tyr105 show a composition bias toward basic and acidic residues. The span at Thr110–Leu139 shows a compositional bias: polar residues. Phosphoserine is present on residues Ser114, Ser117, Ser125, Ser129, and Ser133. At Thr136 the chain carries Phosphothreonine. Phosphoserine is present on residues Ser137 and Ser138. Coiled-coil stretches lie at residues Asp143 to Lys239 and Leu282 to Arg430.

It belongs to the LRRFIP family. As to quaternary structure, interacts with DVL3 and FLII. Weakly interacts with MYD88 in resting cells. Following LPS-stimulation, the interaction with MYD88 is rapidly enhanced; the complex gradually dissociates to basal levels after 6 hours of stimulation. Interaction with MYD88 is regulated by LPS-induced phosphorylation. In the presence of LPS, competes with FLII for MYD88-binding.

Its function is as follows. May function as activator of the canonical Wnt signaling pathway, in association with DVL3, upstream of CTNNB1/beta-catenin. Positively regulates Toll-like receptor (TLR) signaling in response to agonist probably by competing with the negative FLII regulator for MYD88-binding. The polypeptide is Leucine-rich repeat flightless-interacting protein 2 (Lrrfip2) (Rattus norvegicus (Rat)).